The primary structure comprises 335 residues: Tetraacyldisaccharide 4'-kinase (335 aa).

58–65 (TMGGAGKT) is a binding site for ATP.

It belongs to the LpxK family.

The enzyme catalyses a lipid A disaccharide + ATP = a lipid IVA + ADP + H(+). Its pathway is glycolipid biosynthesis; lipid IV(A) biosynthesis; lipid IV(A) from (3R)-3-hydroxytetradecanoyl-[acyl-carrier-protein] and UDP-N-acetyl-alpha-D-glucosamine: step 6/6. Functionally, transfers the gamma-phosphate of ATP to the 4'-position of a tetraacyldisaccharide 1-phosphate intermediate (termed DS-1-P) to form tetraacyldisaccharide 1,4'-bis-phosphate (lipid IVA). The sequence is that of Tetraacyldisaccharide 4'-kinase from Caulobacter vibrioides (strain ATCC 19089 / CIP 103742 / CB 15) (Caulobacter crescentus).